The following is a 322-amino-acid chain: uncharacterized protein (322 aa).

The protein to M.jannaschii MJ0640 and MJ0799.

This is an uncharacterized protein from Synechocystis sp. (strain ATCC 27184 / PCC 6803 / Kazusa).